The sequence spans 28 residues: Arylalkyl acylamidase (28 aa).

In terms of assembly, homotetramer.

It carries out the reaction an N-acetylarylalkylamine + H2O = an aralkylamine + acetate. Activated by divalent metal ions. Inhibited by certain thiol reagents. Its function is as follows. Shows a strict specificity for N-acetyl arylalkylamines but not acetanilide derivatives. The sequence is that of Arylalkyl acylamidase from Pseudomonas putida (Arthrobacter siderocapsulatus).